We begin with the raw amino-acid sequence, 143 residues long: Nucleoside diphosphate kinase (143 aa).

ATP-binding residues include lysine 11, phenylalanine 59, arginine 87, threonine 93, arginine 104, and asparagine 114. The Pros-phosphohistidine intermediate role is filled by histidine 117.

This sequence belongs to the NDK family. In terms of assembly, homotetramer. It depends on Mg(2+) as a cofactor.

It localises to the cytoplasm. The enzyme catalyses a 2'-deoxyribonucleoside 5'-diphosphate + ATP = a 2'-deoxyribonucleoside 5'-triphosphate + ADP. It catalyses the reaction a ribonucleoside 5'-diphosphate + ATP = a ribonucleoside 5'-triphosphate + ADP. In terms of biological role, major role in the synthesis of nucleoside triphosphates other than ATP. The ATP gamma phosphate is transferred to the NDP beta phosphate via a ping-pong mechanism, using a phosphorylated active-site intermediate. The sequence is that of Nucleoside diphosphate kinase from Shewanella amazonensis (strain ATCC BAA-1098 / SB2B).